A 337-amino-acid chain; its full sequence is 5-formaminoimidazole-4-carboxamide-1-(beta)-D-ribofuranosyl 5'-monophosphate synthetase (337 aa).

2 residues coordinate 5-amino-1-(5-phospho-beta-D-ribosyl)imidazole-4-carboxamide: His-14 and Ser-74. An ATP-grasp domain is found at 81–328; the sequence is VELVERMKVP…IAREIRLAIE (248 aa). Residues 125-185 and Glu-207 contribute to the ATP site; that span reads PDDI…VPVY. 5-amino-1-(5-phospho-beta-D-ribosyl)imidazole-4-carboxamide is bound at residue Asn-235. The Mg(2+) site is built by Glu-273 and Glu-286.

Belongs to the phosphohexose mutase family. It depends on Mg(2+) as a cofactor. The cofactor is Mn(2+).

It catalyses the reaction 5-amino-1-(5-phospho-beta-D-ribosyl)imidazole-4-carboxamide + formate + ATP = 5-formamido-1-(5-phospho-D-ribosyl)imidazole-4-carboxamide + ADP + phosphate. It functions in the pathway purine metabolism; IMP biosynthesis via de novo pathway; 5-formamido-1-(5-phospho-D-ribosyl)imidazole-4-carboxamide from 5-amino-1-(5-phospho-D-ribosyl)imidazole-4-carboxamide (formate route): step 1/1. In terms of biological role, catalyzes the ATP- and formate-dependent formylation of 5-aminoimidazole-4-carboxamide-1-beta-d-ribofuranosyl 5'-monophosphate (AICAR) to 5-formaminoimidazole-4-carboxamide-1-beta-d-ribofuranosyl 5'-monophosphate (FAICAR) in the absence of folates. This chain is 5-formaminoimidazole-4-carboxamide-1-(beta)-D-ribofuranosyl 5'-monophosphate synthetase, found in Pyrococcus abyssi (strain GE5 / Orsay).